The chain runs to 836 residues: Tuftelin-interacting protein 11 (836 aa).

A compositionally biased stretch (basic and acidic residues) spans 1–13 (MSLSHLYRDGEGH). Disordered regions lie at residues 1 to 31 (MSLSHLYRDGEGHMDDDEDERENFEITDWDL), 54 to 73 (WAERDSDEERPSFGGKRARD), and 85 to 136 (LKKG…AGGT). The tract at residues 1–50 (MSLSHLYRDGEGHMDDDEDERENFEITDWDLQNEFNPNRQRHWQTKEEAT) is required for interaction with DHX15. S2 is modified (phosphoserine). Over residues 14–28 (MDDDEDERENFEITD) the composition is skewed to acidic residues. The segment covering 54-64 (WAERDSDEERP) has biased composition (basic and acidic residues). Residues S59 and S98 each carry the phosphoserine modification. Over residues 91-102 (EEAELEDSDDEE) the composition is skewed to acidic residues. Basic and acidic residues predominate over residues 103–116 (KPVKQDEFPKDFGP). S144 carries the post-translational modification Phosphoserine. In terms of domain architecture, G-patch spans 149 to 195 (TKGIGQKLLQKMGYVPGRGLGKNAQGIINPIEAKQRKGKGAVGAYGS). The disordered stretch occupies residues 183-236 (QRKGKGAVGAYGSERTTQSLQDFPVVDSEEEAEEEFQKELSQWRKDPSGSKKKP). S210 carries the phosphoserine modification. Over residues 217–231 (EFQKELSQWRKDPSG) the composition is skewed to basic and acidic residues. A Nuclear localization signal motif is present at residues 699 to 704 (VKDKFN). Residues 709–733 (IMNRAVSSNVGAYMQPGARENIAYL) are required for nuclear speckle localization.

It belongs to the TFP11/STIP family. Identified in the spliceosome C complex. Found in the Intron Large (IL) complex, a post-mRNA release spliceosomal complex containing the excised intron, U2, U5 and U6 snRNPs, and splicing factors. Interacts with TUFT1. Interacts with DHX15; indicative for a recruitment of DHX15 to the IL complex. Interacts with GCFC2.

The protein localises to the cytoplasm. Its subcellular location is the nucleus. Involved in pre-mRNA splicing, specifically in spliceosome disassembly during late-stage splicing events. Intron turnover seems to proceed through reactions in two lariat-intron associated complexes termed Intron Large (IL) and Intron Small (IS). In cooperation with DHX15 seems to mediate the transition of the U2, U5 and U6 snRNP-containing IL complex to the snRNP-free IS complex leading to efficient debranching and turnover of excised introns. May play a role in the differentiation of ameloblasts and odontoblasts or in the forming of the enamel extracellular matrix. This Sus scrofa (Pig) protein is Tuftelin-interacting protein 11 (TFIP11).